Consider the following 207-residue polypeptide: ATP synthase subunit b (207 aa).

A signal peptide spans 1 to 27 (MKLRATFVFKTTLVALSFALFALFLVS). Residue C28 is the site of N-palmitoyl cysteine attachment. C28 carries S-diacylglycerol cysteine lipidation. Residues 49 to 69 (WVFLAHLLAFVILLFLLLFLF) form a helical membrane-spanning segment.

It belongs to the ATPase B chain family. As to quaternary structure, F-type ATPases have 2 components, F(1) - the catalytic core - and F(0) - the membrane proton channel. F(1) has five subunits: alpha(3), beta(3), gamma(1), delta(1), epsilon(1). F(0) has three main subunits: a(1), b(2) and c(10-14). The alpha and beta chains form an alternating ring which encloses part of the gamma chain. F(1) is attached to F(0) by a central stalk formed by the gamma and epsilon chains, while a peripheral stalk is formed by the delta and b chains.

The protein localises to the cell membrane. Its function is as follows. F(1)F(0) ATP synthase produces ATP from ADP in the presence of a proton or sodium gradient. F-type ATPases consist of two structural domains, F(1) containing the extramembraneous catalytic core and F(0) containing the membrane proton channel, linked together by a central stalk and a peripheral stalk. During catalysis, ATP synthesis in the catalytic domain of F(1) is coupled via a rotary mechanism of the central stalk subunits to proton translocation. Component of the F(0) channel, it forms part of the peripheral stalk, linking F(1) to F(0). This Mycoplasma pneumoniae (strain ATCC 29342 / M129 / Subtype 1) (Mycoplasmoides pneumoniae) protein is ATP synthase subunit b.